A 661-amino-acid polypeptide reads, in one-letter code: Transketolase (661 aa).

H28 contacts substrate. Thiamine diphosphate contacts are provided by residues H68 and 116–118; that span reads GPL. Residue E157 coordinates Mg(2+). Thiamine diphosphate contacts are provided by G158 and N187. Mg(2+)-binding residues include N187 and I189. Residues H261 and R358 each contribute to the substrate site. H261 contributes to the thiamine diphosphate binding site. E412 functions as the Proton donor in the catalytic mechanism. F438 serves as a coordination point for thiamine diphosphate. Substrate is bound by residues H462, D470, and R521.

It belongs to the transketolase family. As to quaternary structure, homodimer. Mg(2+) is required as a cofactor. Requires Ca(2+) as cofactor. The cofactor is Mn(2+). Co(2+) serves as cofactor. It depends on thiamine diphosphate as a cofactor.

It catalyses the reaction D-sedoheptulose 7-phosphate + D-glyceraldehyde 3-phosphate = aldehydo-D-ribose 5-phosphate + D-xylulose 5-phosphate. Its function is as follows. Catalyzes the transfer of a two-carbon ketol group from a ketose donor to an aldose acceptor, via a covalent intermediate with the cofactor thiamine pyrophosphate. This is Transketolase (tkt) from Treponema pallidum (strain Nichols).